A 189-amino-acid polypeptide reads, in one-letter code: GTP cyclohydrolase 1 (189 aa).

Residues Cys-78, His-81, and Cys-150 each contribute to the Zn(2+) site.

The protein belongs to the GTP cyclohydrolase I family. Toroid-shaped homodecamer, composed of two pentamers of five dimers.

It carries out the reaction GTP + H2O = 7,8-dihydroneopterin 3'-triphosphate + formate + H(+). It functions in the pathway cofactor biosynthesis; 7,8-dihydroneopterin triphosphate biosynthesis; 7,8-dihydroneopterin triphosphate from GTP: step 1/1. The sequence is that of GTP cyclohydrolase 1 from Listeria welshimeri serovar 6b (strain ATCC 35897 / DSM 20650 / CCUG 15529 / CIP 8149 / NCTC 11857 / SLCC 5334 / V8).